We begin with the raw amino-acid sequence, 764 residues long: Complement factor B (764 aa).

Residues 1–25 (MGSNLSPQLCLMPFILGLLSGGVTT) form the signal peptide. Sushi domains follow at residues 35 to 100 (GSCS…ECRA), 101 to 160 (IHCP…ICDN), and 163 to 220 (GYCS…SCQD). 6 cysteine pairs are disulfide-bonded: Cys37–Cys76, Cys62–Cys98, Cys103–Cys145, Cys131–Cys158, Cys165–Cys205, and Cys191–Cys218. N-linked (GlcNAc...) asparagine glycans are attached at residues Asn122 and Asn142. One can recognise a VWFA domain in the interval 270-469 (NIYLVLDGSD…NLEDVFFQMI (200 aa)). Positions 278 and 280 each coordinate Mg(2+). Residue Asn285 is glycosylated (N-linked (GlcNAc...) asparagine). Residue Thr353 coordinates Mg(2+). Asn378 is a glycosylation site (N-linked (GlcNAc...) asparagine). The region spanning 477–757 (LCGMVWEHRK…VLPWLKQKLQ (281 aa)) is the Peptidase S1 domain. 5 disulfides stabilise this stretch: Cys478–Cys596, Cys511–Cys527, Cys599–Cys615, Cys656–Cys682, and Cys695–Cys725. Active-site charge relay system residues include His526 and Asp576. The active-site Charge relay system is Ser699.

This sequence belongs to the peptidase S1 family. In terms of assembly, monomer. Interacts with complement C3b; this interaction is dependent on the presence of Mg(2+). Catalytic component of the C3 convertase of the alternative complement pathway, also named C3bBb, composed of complement factor B Bb and complement C3b. Catalytic component of the C5 convertase of the alternative complement pathway, also named C3bBb3b, composed of complement factor B Bb and additional molecules of complement C3b. Interacts to CFP; this interaction contributes to the stabilization of the active C3-convertase enzyme complex. The cofactor is Mg(2+). It depends on Mn(2+) as a cofactor. Post-translationally, cleaved by CFD following activation of the alternative complement system, generating Ba and Bb chains. Cleavage and activation takes place when CFB is already associated with complement C3b.

Its subcellular location is the secreted. It is found in the cell surface. It catalyses the reaction Cleavage of Arg-|-Ser bond in complement component C3 alpha-chain to yield C3a and C3b, and Arg-|-Xaa bond in complement component C5 alpha-chain to yield C5a and C5b.. Functionally, precursor of the catalytic component of the C3 and C5 convertase complexes of the alternative pathway of the complement system, a cascade of proteins that leads to phagocytosis and breakdown of pathogens and signaling that strengthens the adaptive immune system. The alternative complement pathway acts as an amplification loop that enhances other complement pathways (classical, lectin and GZMK) by promoting formation of additional C3 and C5 convertases. CFB is cleaved and activated by CFD to generate Ba and Bb chains; Bb chain constituting the catalytic component of the C3 and C5 convertases. Its function is as follows. Serine protease component of the complement C3 and C5 convertase complexes of the alternative complement pathway. Following cleavage and activation by factor D (CFD), forms the C3 convertase together with complement C3b. As part of the C3 convertase, cleaves and activates C3 into C3a anaphylatoxin and C3b opsonin, the next components of the complement pathways. When an additional complement C3b molecule binds to the C3 convertase, forms the C5 convertase, which cleaves and activates C5 into C5a anaphylatoxin and C5b component of the membrane attack complex. In terms of biological role, involved in proliferation and differentiation of preactivated B-lymphocytes, rapid spreading of peripheral blood monocytes, stimulation of lymphocyte blastogenesis and lysis of erythrocytes. In Pongo pygmaeus (Bornean orangutan), this protein is Complement factor B (CFB).